The primary structure comprises 213 residues: Octanoyltransferase (213 aa).

A BPL/LPL catalytic domain is found at 27–209; the sequence is AATPDEVWLC…RLLAAMPEPA (183 aa). Residues 66-73, 140-142, and 153-155 contribute to the substrate site; these read RGGQVTYH, ALG, and GVA. Residue cysteine 171 is the Acyl-thioester intermediate of the active site.

The protein belongs to the LipB family.

The protein localises to the cytoplasm. It carries out the reaction octanoyl-[ACP] + L-lysyl-[protein] = N(6)-octanoyl-L-lysyl-[protein] + holo-[ACP] + H(+). The protein operates within protein modification; protein lipoylation via endogenous pathway; protein N(6)-(lipoyl)lysine from octanoyl-[acyl-carrier-protein]: step 1/2. In terms of biological role, catalyzes the transfer of endogenously produced octanoic acid from octanoyl-acyl-carrier-protein onto the lipoyl domains of lipoate-dependent enzymes. Lipoyl-ACP can also act as a substrate although octanoyl-ACP is likely to be the physiological substrate. The chain is Octanoyltransferase from Bordetella petrii (strain ATCC BAA-461 / DSM 12804 / CCUG 43448).